Consider the following 428-residue polypeptide: Serine--tRNA ligase (428 aa).

231–233 (TAE) provides a ligand contact to L-serine. 262-264 (RSE) is a binding site for ATP. Glu-285 is an L-serine binding site. 349–352 (EISS) lines the ATP pocket. Ser-385 is a binding site for L-serine.

The protein belongs to the class-II aminoacyl-tRNA synthetase family. Type-1 seryl-tRNA synthetase subfamily. Homodimer. The tRNA molecule binds across the dimer.

The protein resides in the cytoplasm. The enzyme catalyses tRNA(Ser) + L-serine + ATP = L-seryl-tRNA(Ser) + AMP + diphosphate + H(+). The catalysed reaction is tRNA(Sec) + L-serine + ATP = L-seryl-tRNA(Sec) + AMP + diphosphate + H(+). Its pathway is aminoacyl-tRNA biosynthesis; selenocysteinyl-tRNA(Sec) biosynthesis; L-seryl-tRNA(Sec) from L-serine and tRNA(Sec): step 1/1. In terms of biological role, catalyzes the attachment of serine to tRNA(Ser). Is also able to aminoacylate tRNA(Sec) with serine, to form the misacylated tRNA L-seryl-tRNA(Sec), which will be further converted into selenocysteinyl-tRNA(Sec). This Staphylococcus haemolyticus (strain JCSC1435) protein is Serine--tRNA ligase.